The chain runs to 173 residues: Protein sym1 (173 aa).

The next 4 helical transmembrane spans lie at 12–32 (QPIL…DVLA), 52–72 (MALY…GFLQ), 129–149 (ANLT…PLEY), and 151–171 (VLVV…INSG).

It belongs to the peroxisomal membrane protein PXMP2/4 family.

It localises to the mitochondrion inner membrane. May be involved in cellular response to stress. Required to maintain mitochondrial DNA (mtDNA) integrity and stability. This is Protein sym1 (sym1) from Aspergillus oryzae (strain ATCC 42149 / RIB 40) (Yellow koji mold).